The primary structure comprises 730 residues: Elongation factor 2 (730 aa).

The region spanning 19-229 (LMIRNIGIVA…GVSFSEVFNY (211 aa)) is the tr-type G domain. Residues 28–35 (AHIDHGKT), 94–98 (DTPGH), and 148–151 (NKVD) contribute to the GTP site. His596 bears the Diphthamide mark.

Belongs to the TRAFAC class translation factor GTPase superfamily. Classic translation factor GTPase family. EF-G/EF-2 subfamily.

The protein resides in the cytoplasm. Catalyzes the GTP-dependent ribosomal translocation step during translation elongation. During this step, the ribosome changes from the pre-translocational (PRE) to the post-translocational (POST) state as the newly formed A-site-bound peptidyl-tRNA and P-site-bound deacylated tRNA move to the P and E sites, respectively. Catalyzes the coordinated movement of the two tRNA molecules, the mRNA and conformational changes in the ribosome. The sequence is that of Elongation factor 2 (fusA) from Methanococcoides burtonii (strain DSM 6242 / NBRC 107633 / OCM 468 / ACE-M).